We begin with the raw amino-acid sequence, 449 residues long: tRNA-2-methylthio-N(6)-dimethylallyladenosine synthase (449 aa).

An MTTase N-terminal domain is found at 3 to 118 (KKVFVKTFGC…LPELLAQREA (116 aa)). Residues cysteine 12, cysteine 49, cysteine 81, cysteine 155, cysteine 159, and cysteine 162 each coordinate [4Fe-4S] cluster. Positions 141 to 376 (RVEGASAFVS…VINANIKSIS (236 aa)) constitute a Radical SAM core domain. The region spanning 377–440 (ESRVGTVQRI…AYTLRGEVVT (64 aa)) is the TRAM domain.

This sequence belongs to the methylthiotransferase family. MiaB subfamily. As to quaternary structure, monomer. Requires [4Fe-4S] cluster as cofactor.

The protein localises to the cytoplasm. It catalyses the reaction N(6)-dimethylallyladenosine(37) in tRNA + (sulfur carrier)-SH + AH2 + 2 S-adenosyl-L-methionine = 2-methylsulfanyl-N(6)-dimethylallyladenosine(37) in tRNA + (sulfur carrier)-H + 5'-deoxyadenosine + L-methionine + A + S-adenosyl-L-homocysteine + 2 H(+). Catalyzes the methylthiolation of N6-(dimethylallyl)adenosine (i(6)A), leading to the formation of 2-methylthio-N6-(dimethylallyl)adenosine (ms(2)i(6)A) at position 37 in tRNAs that read codons beginning with uridine. The protein is tRNA-2-methylthio-N(6)-dimethylallyladenosine synthase of Paracidovorax citrulli (strain AAC00-1) (Acidovorax citrulli).